We begin with the raw amino-acid sequence, 124 residues long: Hydrogenase maturation factor HypA (124 aa).

His-2 serves as a coordination point for Ni(2+). Cys-78, Cys-81, Cys-97, and Cys-100 together coordinate Zn(2+).

Belongs to the HypA/HybF family.

In terms of biological role, involved in the maturation of [NiFe] hydrogenases. Required for nickel insertion into the metal center of the hydrogenase. This chain is Hydrogenase maturation factor HypA, found in Methanocaldococcus jannaschii (strain ATCC 43067 / DSM 2661 / JAL-1 / JCM 10045 / NBRC 100440) (Methanococcus jannaschii).